Reading from the N-terminus, the 436-residue chain is Glutamate-1-semialdehyde 2,1-aminomutase (436 aa).

At Lys-276 the chain carries N6-(pyridoxal phosphate)lysine.

It belongs to the class-III pyridoxal-phosphate-dependent aminotransferase family. HemL subfamily. Homodimer. Pyridoxal 5'-phosphate is required as a cofactor.

The protein localises to the cytoplasm. The catalysed reaction is (S)-4-amino-5-oxopentanoate = 5-aminolevulinate. Its pathway is porphyrin-containing compound metabolism; protoporphyrin-IX biosynthesis; 5-aminolevulinate from L-glutamyl-tRNA(Glu): step 2/2. It participates in porphyrin-containing compound metabolism; chlorophyll biosynthesis. The polypeptide is Glutamate-1-semialdehyde 2,1-aminomutase (Synechococcus sp. (strain JA-2-3B'a(2-13)) (Cyanobacteria bacterium Yellowstone B-Prime)).